The sequence spans 357 residues: S-adenosylmethionine:tRNA ribosyltransferase-isomerase (357 aa).

The protein belongs to the QueA family. Monomer.

It localises to the cytoplasm. The enzyme catalyses 7-aminomethyl-7-carbaguanosine(34) in tRNA + S-adenosyl-L-methionine = epoxyqueuosine(34) in tRNA + adenine + L-methionine + 2 H(+). The protein operates within tRNA modification; tRNA-queuosine biosynthesis. In terms of biological role, transfers and isomerizes the ribose moiety from AdoMet to the 7-aminomethyl group of 7-deazaguanine (preQ1-tRNA) to give epoxyqueuosine (oQ-tRNA). This Edwardsiella ictaluri (strain 93-146) protein is S-adenosylmethionine:tRNA ribosyltransferase-isomerase.